Reading from the N-terminus, the 247-residue chain is DNA polymerase sliding clamp (247 aa).

The protein belongs to the PCNA family. Homotrimer. The subunits circularize to form a toroid; DNA passes through its center. Replication factor C (RFC) is required to load the toroid on the DNA.

In terms of biological role, sliding clamp subunit that acts as a moving platform for DNA processing. Responsible for tethering the catalytic subunit of DNA polymerase and other proteins to DNA during high-speed replication. The protein is DNA polymerase sliding clamp of Thermofilum pendens (strain DSM 2475 / Hrk 5).